The chain runs to 98 residues: Homeobox protein Ht-En (98 aa).

Positions 3–62 (EKRPRTAFTGDQLARLKREFSENKYLTEQRRTCLAKELNLNESQIKIWFQNKRAKMKKAS) form a DNA-binding region, homeobox. The disordered stretch occupies residues 79-98 (NHSSSSSSSSSSSSSIFLLA). Low complexity predominate over residues 81–98 (SSSSSSSSSSSSSIFLLA).

The protein belongs to the engrailed homeobox family. In terms of processing, phosphorylated in the Ser-rich domain.

Its subcellular location is the nucleus. This protein specifies the body segmentation pattern. This is Homeobox protein Ht-En (HT-EN) from Helobdella triserialis (Leech).